The chain runs to 882 residues: MKKQIGDRYEPKDVENKWISLWEKKKSFAPNSNARESFSIVIPPPNVTGSLHIGHALNHTIQDILVRIERKKGKSTLWLPGMDHAGIATQMVVERELAKESKKRTDFTREEFIHKVWEWKNHSGGMITKQQKLLGESVDWSRERFTLDEGLSKAVFKVFKSLYDEGLIYRGERIINWCPASQTAISDLEVEFRETKGKLYHIKYPIHGKKDQFLVVATTRPETMLGDVAVCANPEDERYTSLKDVVLDLPLTNRQIPLLFDSFVDKEFGSGLVKITPAHDANDFEAGQRLGLKPLLVMNPNGTMNENAGIYQGLDRFEARKKVLADLEAKGLIEKIEDHIHAVGHNSRGGAVIEPYLSTQWFVKIKPLADLAVQAVQSGQVEFIPKMWEKTFFEWMNNIRDWCISRQLWWGHRIPAYHCKKCKHFEVSETAVTVCTSCGSQEVEPDPDVLDTWFSSQLWPFSTLGWPDQTEDLKRYYPTSVLVTGFDIIFFWVSRMIMMGMKFMQAPPFHKVLIHGLVRDKDGKKFSKSVGNVIDPLVMMDKYGTDSFRFFLAATLPEGKDILFDESRLDGYRSFCNKIWNSSRFILMNLEESFVPIGITPDIEKDLEPMDQWILSRFNHCLEEYNKAHSKFHFYEMAAAIYEFIWGDFCDWYIELVKPRAYGKVSPRSAEVAKQVLSDVLIRALGLLHPFMPFLTEEVHSVFSDQYIVTTPFPESYPVASDSLGVQKLNLLQEIVTKIRVMRSENGVAPDRKCKAIVKSSDNLSSSTILENEVSLLQLARLESIRIDTLYEIQKTDSVSHFTKGEIVLPLEGLIDVAKEKTRLEKELQKSELEKEKLEIKLSNPGFLSKAAPEVVEKERDKLKTLIDKVEVLKKGIQNLAG.

A 'HIGH' region motif is present at residues 45–55; that stretch reads PNVTGSLHIGH. A 'KMSKS' region motif is present at residues 525 to 529; the sequence is KFSKS. An ATP-binding site is contributed by Lys528. A coiled-coil region spans residues 812–881; sequence EGLIDVAKEK…VLKKGIQNLA (70 aa).

Belongs to the class-I aminoacyl-tRNA synthetase family. ValS type 1 subfamily. In terms of assembly, monomer.

It localises to the cytoplasm. The enzyme catalyses tRNA(Val) + L-valine + ATP = L-valyl-tRNA(Val) + AMP + diphosphate. Its function is as follows. Catalyzes the attachment of valine to tRNA(Val). As ValRS can inadvertently accommodate and process structurally similar amino acids such as threonine, to avoid such errors, it has a 'posttransfer' editing activity that hydrolyzes mischarged Thr-tRNA(Val) in a tRNA-dependent manner. This Leptospira interrogans serogroup Icterohaemorrhagiae serovar Lai (strain 56601) protein is Valine--tRNA ligase.